We begin with the raw amino-acid sequence, 243 residues long: Probable 2-phosphosulfolactate phosphatase (243 aa).

It belongs to the ComB family. Mg(2+) serves as cofactor.

The enzyme catalyses (2R)-O-phospho-3-sulfolactate + H2O = (2R)-3-sulfolactate + phosphate. This Synechococcus sp. (strain CC9605) protein is Probable 2-phosphosulfolactate phosphatase.